Consider the following 318-residue polypeptide: Isoflavone reductase (318 aa).

Residues 11–17 (GPTGAIG), arginine 36, and lysine 44 each bind NADP(+). The Proton acceptor role is filled by lysine 144. Arginine 148 lines the NADP(+) pocket.

The protein belongs to the NmrA-type oxidoreductase family. Isoflavone reductase subfamily.

The enzyme catalyses (3R)-vestitone + NADP(+) = 2'-hydroxyformononetin + NADPH + 2 H(+). The protein operates within phytoalexin biosynthesis; pterocarpan phytoalexin biosynthesis. Its function is as follows. Reduces achiral isoflavones to chiral isoflavanones during the biosynthesis of chiral pterocarpan phytoalexins. The polypeptide is Isoflavone reductase (IFR) (Cicer arietinum (Chickpea)).